Here is a 304-residue protein sequence, read N- to C-terminus: Coenzyme PQQ synthesis protein B (304 aa).

This sequence belongs to the PqqB family.

Its pathway is cofactor biosynthesis; pyrroloquinoline quinone biosynthesis. In terms of biological role, may be involved in the transport of PQQ or its precursor to the periplasm. The sequence is that of Coenzyme PQQ synthesis protein B from Pseudomonas aeruginosa (strain LESB58).